Consider the following 316-residue polypeptide: Apolipoprotein E (316 aa).

A signal peptide spans 1–18; sequence MKVLWVALVITLLAGCQA. Repeat copies occupy residues 79–100, 101–122, 123–144, 145–166, 167–188, 189–210, 211–232, and 233–254. The segment at 79–254 is 8 X 22 AA approximate tandem repeats; it reads VLMDETMKEV…HLEEMREQLE (176 aa). The interval 157 to 167 is LDL and other lipoprotein receptors binding; sequence HLRKLRKRLLR. 161 to 164 provides a ligand contact to heparin; that stretch reads LRKR. Residues 209 to 289 are lipid-binding and lipoprotein association; the sequence is AATVGTLASQ…SWFEPLVEDM (81 aa). 228 to 235 lines the heparin pocket; sequence HQKLRGRM. Residues 265–316 form a homooligomerization region; it reads SQMRLQAEAFQARLKSWFEPLVEDMQRQWAGLVEKVQLAMATGPTSAPIENN. Residues 277–289 form a specificity for association with VLDL region; it reads RLKSWFEPLVEDM.

The protein belongs to the apolipoprotein A1/A4/E family. As to quaternary structure, homotetramer. May interact with ABCA1; functionally associated with ABCA1 in the biogenesis of HDLs. May interact with APP/A4 amyloid-beta peptide; the interaction is extremely stable in vitro but its physiological significance is unclear. May interact with MAPT. May interact with MAP2. In the cerebrospinal fluid, interacts with secreted SORL1. Interacts with PMEL; this allows the loading of PMEL luminal fragment on ILVs to induce fibril nucleation. Post-translationally, APOE exists as multiple glycosylated and sialylated glycoforms within cells and in plasma. The extent of glycosylation and sialylation are tissue and context specific. In terms of processing, glycated in plasma VLDL. Phosphorylated by FAM20C in the extracellular medium.

It is found in the secreted. The protein localises to the extracellular space. The protein resides in the extracellular matrix. It localises to the extracellular vesicle. Its subcellular location is the endosome. It is found in the multivesicular body. Functionally, APOE is an apolipoprotein, a protein associating with lipid particles, that mainly functions in lipoprotein-mediated lipid transport between organs via the plasma and interstitial fluids. APOE is a core component of plasma lipoproteins and is involved in their production, conversion and clearance. Apolipoproteins are amphipathic molecules that interact both with lipids of the lipoprotein particle core and the aqueous environment of the plasma. As such, APOE associates with chylomicrons, chylomicron remnants, very low density lipoproteins (VLDL) and intermediate density lipoproteins (IDL) but shows a preferential binding to high-density lipoproteins (HDL). It also binds a wide range of cellular receptors including the LDL receptor/LDLR and the very low-density lipoprotein receptor/VLDLR that mediate the cellular uptake of the APOE-containing lipoprotein particles. Finally, APOE also has a heparin-binding activity and binds heparan-sulfate proteoglycans on the surface of cells, a property that supports the capture and the receptor-mediated uptake of APOE-containing lipoproteins by cells. This is Apolipoprotein E (APOE) from Tursiops truncatus (Atlantic bottle-nosed dolphin).